We begin with the raw amino-acid sequence, 186 residues long: Peptidyl-tRNA hydrolase (186 aa).

TRNA is bound at residue Tyr-14. His-19 acts as the Proton acceptor in catalysis. TRNA is bound by residues Tyr-64, Asn-66, and Asn-112.

Belongs to the PTH family. As to quaternary structure, monomer.

It localises to the cytoplasm. The enzyme catalyses an N-acyl-L-alpha-aminoacyl-tRNA + H2O = an N-acyl-L-amino acid + a tRNA + H(+). Hydrolyzes ribosome-free peptidyl-tRNAs (with 1 or more amino acids incorporated), which drop off the ribosome during protein synthesis, or as a result of ribosome stalling. In terms of biological role, catalyzes the release of premature peptidyl moieties from peptidyl-tRNA molecules trapped in stalled 50S ribosomal subunits, and thus maintains levels of free tRNAs and 50S ribosomes. In Bacillus cereus (strain Q1), this protein is Peptidyl-tRNA hydrolase.